The primary structure comprises 1065 residues: NLR family CARD domain-containing protein 3 (1065 aa).

The segment covering M1–R10 has biased composition (basic and acidic residues). A disordered region spans residues M1–R62. Residues R139 to E460 form the NACHT domain. Residue G145–T152 coordinates ATP. The TRAF6-binding signature appears at S457 to E460. 16 LRR repeats span residues E617–C639, K641–G663, D665–R688, N693–D716, N721–E744, N749–D772, N777–E800, N805–G828, N833–H856, N861–V884, N889–Q912, N917–R940, N945–E968, N973–N996, N1001–N1029, and R1031–E1052.

The protein belongs to the NLRP family. In terms of assembly, directly interacts (via CARD) with TMEM173/STING; this interaction reduces TMEM173 trafficking to the perinuclear region in response to interferon stimulatory DNA. Also interacts, but to a lesser extent, with TBK1. Interacts with TRAF6; this interaction results in decreased TRAF6 'Lys-63'-linked polyubiquitination, but leaves 'Lys-48'-linked chains unchanged, promoting TRAF6 protein degradation. Interacts with PIK3R1/PIK3R2; this interaction disrupts the association between PIK3R1/PIK3R2 and the p110 catalytic subunit PIK3CA/PIK3CB/PIK3CD and reduces PIK3R1/PIK3R2 activation. Weakly interacts with PYCARD/ASC. Interacts with CASP1 and CASP5.

It is found in the cytoplasm. In terms of biological role, negative regulator of the innate immune response. Attenuates signaling pathways activated by Toll-like receptors (TLRs) and the DNA sensor STING/TMEM173 in response to pathogen-associated molecular patterns, such as intracellular poly(dA:dT), but not poly(I:C), or in response to DNA virus infection, including that of Herpes simplex virus 1 (HSV1). May affect TLR4 signaling by acting at the level of TRAF6 ubiquitination, decreasing the activating 'Lys-63'-linked ubiquitination and leaving unchanged the degradative 'Lys-48'-linked ubiquitination. Inhibits the PI3K-AKT-mTOR pathway possibly by directly interacting with the posphatidylinositol 3-kinase regulatory subunit p85 (PIK3R1/PIK3R2) and disrupting the association between PIK3R1/PIK3R2 and the catalytic subunit p110 (PIK3CA/PIK3CB/PIK3CD) and reducing PIK3R1/PIK3R2 activation. Via its regulation of the PI3K-AKT-mTOR pathway, controls cell proliferation, predominantly in intestinal epithelial cells. May also affect NOD1- or NOD2-mediated NF-kappa-B activation. Might also affect the inflammatory response by preventing NLRP3 inflammasome formation, CASP1 cleavage and IL1B maturation. This chain is NLR family CARD domain-containing protein 3 (NLRC3), found in Homo sapiens (Human).